Consider the following 803-residue polypeptide: Ras GTPase-activating protein 4B (803 aa).

2 C2 domains span residues 1-105 (MAKR…SGWA) and 116-232 (VQGE…EGWF). 12 residues coordinate Ca(2+): D21, D27, D74, D76, S79, D82, D149, D155, D202, D204, S207, and D210. One can recognise a Ras-GAP domain in the interval 318-546 (GLAKDFLDLL…AQLKDFITKL (229 aa)). Residues 566–673 (PPVKEGPLFI…WLSALRKVSI (108 aa)) form the PH domain. The Btk-type zinc-finger motif lies at 675–711 (NTGLLGSYHPGVFRGDKWSCCHQKEKTGQGCDKTRSR). 4 residues coordinate Zn(2+): H683, C694, C695, and C705. Positions 781–803 (EAHSSSPAGSPPSEPNCLLELQT) are disordered.

Requires Ca(2+) as cofactor.

It is found in the cytoplasm. Its subcellular location is the cytosol. The protein resides in the cell membrane. Its function is as follows. Ca(2+)-dependent Ras GTPase-activating protein, that may play a role in the Ras-MAPK pathway. This chain is Ras GTPase-activating protein 4B (RASA4B), found in Homo sapiens (Human).